The primary structure comprises 475 residues: E3 ubiquitin-protein ligase TRIM62 (475 aa).

The RING-type zinc-finger motif lies at 11–54 (CSICLSIYQDPVSLGCEHYFCRRCITEHWVRQEAQGARDCPECR). The B box-type zinc finger occupies 88–128 (RAARPCQAHDKVKLFCLTDRALLCFFCDEPALHEQHQVTGI). Zn(2+) contacts are provided by Cys93, His96, Cys114, and His120. A coiled-coil region spans residues 127–241 (GIDDAFDELQ…LQERLAETDR (115 aa)). Positions 277 to 475 (PLQYTIWKSL…QPLRINTVRI (199 aa)) constitute a B30.2/SPRY domain.

The protein belongs to the TRIM/RBCC family. In terms of assembly, interacts with the ubiquitin-conjugating enzyme, UBE2D2. In terms of processing, polyubiquitinated, autoubiquitinated in the presence of UBE2D2.

It is found in the cytoplasm. It catalyses the reaction S-ubiquitinyl-[E2 ubiquitin-conjugating enzyme]-L-cysteine + [acceptor protein]-L-lysine = [E2 ubiquitin-conjugating enzyme]-L-cysteine + N(6)-ubiquitinyl-[acceptor protein]-L-lysine.. It participates in protein modification; protein ubiquitination. Its function is as follows. E3 ubiquitin ligase that plays a role in antifungal immunity by mediating 'Lys-27'-linked ubiquitination of CARD9 downstream of C-type lectin receptors; leading to CARD9 activation, followed by activation of NF-kappa-B and MAP kinase p38 pathways. E3 ubiquitin ligase activity is dependent on E2 ubiquitin-conjugating enzyme UBE2D2. The protein is E3 ubiquitin-protein ligase TRIM62 of Homo sapiens (Human).